We begin with the raw amino-acid sequence, 584 residues long: Arginine--tRNA ligase (584 aa).

The 'HIGH' region motif lies at 129 to 139; the sequence is ANPTGPLHVGH.

It belongs to the class-I aminoacyl-tRNA synthetase family. As to quaternary structure, monomer.

The protein localises to the cytoplasm. It carries out the reaction tRNA(Arg) + L-arginine + ATP = L-arginyl-tRNA(Arg) + AMP + diphosphate. This Halorhodospira halophila (strain DSM 244 / SL1) (Ectothiorhodospira halophila (strain DSM 244 / SL1)) protein is Arginine--tRNA ligase.